Here is a 69-residue protein sequence, read N- to C-terminus: Double-strand break reduction protein (69 aa).

Its function is as follows. Helps to maintain the integrity of the chromosome by lowering the steady-state level of double strand breaks. This region of DNA acts as an antitoxin to toxin RalR, a DNase, but it seems to be sRNA RalA that has the antitoxin activity and not this putative protein. Therefore the identity of this as a protein-coding gene has been cast into doubt. The chain is Double-strand break reduction protein from Escherichia coli (strain K12).